The primary structure comprises 199 residues: Thymidylate kinase (199 aa).

An ATP-binding site is contributed by 7 to 14 (GIDGSGKT).

It belongs to the thymidylate kinase family.

It carries out the reaction dTMP + ATP = dTDP + ADP. Its function is as follows. Phosphorylation of dTMP to form dTDP in both de novo and salvage pathways of dTTP synthesis. This is Thymidylate kinase from Tropheryma whipplei (strain Twist) (Whipple's bacillus).